The primary structure comprises 255 residues: UPF0246 protein Cphy_1568 (255 aa).

This sequence belongs to the UPF0246 family.

The chain is UPF0246 protein Cphy_1568 from Lachnoclostridium phytofermentans (strain ATCC 700394 / DSM 18823 / ISDg) (Clostridium phytofermentans).